Consider the following 922-residue polypeptide: Two-component sensor PprA (922 aa).

Residues 1–10 (MFEFSRSSSA) are compositionally biased toward low complexity. The tract at residues 1–22 (MFEFSRSSSAEAERPEPFSQEG) is disordered. Residues 506–558 (VKTRYRLADGQGNWHWLYDEAKLLRDAQGLPSEAVGLWLDVTEQHLAAQRIAE) enclose the PAC 1 domain. Residues 559–622 (SEERYRVLVE…EDASALRARL (64 aa)) enclose the PAS domain. The 53-residue stretch at 632 to 684 (EVPELRFNLPGQRFLWLVWAERPLFDARGELCEVQAVGRDNTPVRRAQQQLAQ) folds into the PAC 2 domain. One can recognise a Histidine kinase domain in the interval 697–916 (GLAHEVKQPL…LFVVRLPLAA (220 aa)). H700 carries the post-translational modification Phosphohistidine; by autocatalysis.

In terms of processing, autophosphorylated.

It catalyses the reaction ATP + protein L-histidine = ADP + protein N-phospho-L-histidine.. Its function is as follows. Member of the two-component regulatory system PprA/PprB involved in biofilm formation by controlling the expression of many related genes including type IVb pili major subunit flp pilin, adhesin bapA or cupE fimbriae. Functions as a heme sensor histidine kinase which is autophosphorylated at a histidine residue and transfers its phosphate group to PprB. The sequence is that of Two-component sensor PprA from Pseudomonas aeruginosa (strain ATCC 15692 / DSM 22644 / CIP 104116 / JCM 14847 / LMG 12228 / 1C / PRS 101 / PAO1).